Here is a 315-residue protein sequence, read N- to C-terminus: Archaeosortase A (315 aa).

A run of 7 helical transmembrane segments spans residues 12 to 32, 47 to 67, 74 to 94, 173 to 193, 204 to 224, 227 to 247, and 260 to 280; these read VIPYTDVLAWVVMAAFIAGVA, AGAWWLFAVFWFVLIQHFAFV, TVLILIAVPACLYVGWLVFAG, VVFECTGIGAMSIFGGLIAAV, IALSISIIWVLNIGRNVFIAL, GYQWFAYSWLEGPIMALFGLT, and VLAQLLAVVALAGLAWFIARW. Catalysis depends on C177, which acts as the Acyl-thioester intermediate. R218 serves as the catalytic Proton donor.

It belongs to the exosortase/archaeosortase family. Archaeosortase A subfamily.

The protein resides in the cell membrane. Its function is as follows. Transpeptidase that recognizes and modifies its substrate by proteolytic cleavage of a sorting signal. Following cleavage, a covalent intermediate is formed via a thioester bond between the archaeosortase and its substrate, which is then transferred and covalently attached to the cell membrane. The protein is Archaeosortase A of Natronomonas pharaonis (strain ATCC 35678 / DSM 2160 / CIP 103997 / JCM 8858 / NBRC 14720 / NCIMB 2260 / Gabara) (Halobacterium pharaonis).